Here is a 448-residue protein sequence, read N- to C-terminus: Ribosomal protein uS12 methylthiotransferase RimO (448 aa).

An MTTase N-terminal domain is found at 7–123 (EKVSLVSLGC…IAEIIAEKEG (117 aa)). [4Fe-4S] cluster-binding residues include C16, C52, C86, C161, C165, and C168. A Radical SAM core domain is found at 147 to 377 (SSPYYTAYLK…MRTQARVSFK (231 aa)). The region spanning 380-448 (RSLVDTEELV…DYDLIGEIVP (69 aa)) is the TRAM domain.

It belongs to the methylthiotransferase family. RimO subfamily. Requires [4Fe-4S] cluster as cofactor.

It localises to the cytoplasm. It catalyses the reaction L-aspartate(89)-[ribosomal protein uS12]-hydrogen + (sulfur carrier)-SH + AH2 + 2 S-adenosyl-L-methionine = 3-methylsulfanyl-L-aspartate(89)-[ribosomal protein uS12]-hydrogen + (sulfur carrier)-H + 5'-deoxyadenosine + L-methionine + A + S-adenosyl-L-homocysteine + 2 H(+). Catalyzes the methylthiolation of an aspartic acid residue of ribosomal protein uS12. This chain is Ribosomal protein uS12 methylthiotransferase RimO, found in Geotalea uraniireducens (strain Rf4) (Geobacter uraniireducens).